The sequence spans 445 residues: Probable spore coat protein sigD (445 aa).

The signal sequence occupies residues 1 to 20 (MKKVITLLALMAAAQIYAQG). The DSCP-N domain occupies 21–139 (QECINLSENE…GHGVCEDFNR (119 aa)). The span at 141–159 (ESGSGNKEQISTTGNTGPQ) shows a compositional bias: polar residues. A disordered region spans residues 141–161 (ESGSGNKEQISTTGNTGPQTR). Follistatin-like domains lie at 178-201 (ACTNVLCQQGEHCEVDQDGRAHCY), 213-237 (GCLNVVCQPHQHCEIDKESGLAHCV), 272-295 (ICSNVHCPDNYHCEMRQDGKAQCV), 324-348 (VCSNVICPPGYYCQKNEQTGKADCL), 368-391 (VCSNVICPPYFHCEKNDKGWAQCA), and 416-439 (VCQNVHCPQFFKCEKNENGLGECV).

May contribute to the structure of the coat at the interface between the middle, cellulosic layer and the outer, electron-dense, proteinaceous layer. In Dictyostelium discoideum (Social amoeba), this protein is Probable spore coat protein sigD (sigD).